A 66-amino-acid polypeptide reads, in one-letter code: Sarcoplasmic/endoplasmic reticulum calcium ATPase regulator ARLN (66 aa).

Methionine 1 bears the N-acetylmethionine mark. The disordered stretch occupies residues 1-37 (MEVDAPGVDGRDGLRERRGFSEGGRQNFDVRPQSGAN). Positions 9 to 20 (DGRDGLRERRGF) are enriched in basic and acidic residues. The helical transmembrane segment at 45–65 (WLDLWLFILFDVVVFLFVYFL) threads the bilayer.

As to quaternary structure, homooligomer. Can also form heterooligomers with other sarcoplasmic/endoplasmic reticulum calcium ATPase (SERCA) regulators ERLN, PLN, SLN and STRIT1/DWORF. Monomer. Interacts as a monomer with ATP2A2/SERCA2; the interaction results in inhibition of ATP2A2 Ca(2+) affinity.

The protein localises to the endoplasmic reticulum membrane. Functionally, inhibits the activity of the calcium ATPases ATP2A2/SERCA2 and ATP2A3/SERCA3 by decreasing their apparent affinity for Ca(2+). The polypeptide is Sarcoplasmic/endoplasmic reticulum calcium ATPase regulator ARLN (Homo sapiens (Human)).